Here is an 811-residue protein sequence, read N- to C-terminus: RFX-like DNA-binding protein RFX1 (811 aa).

Disordered stretches follow at residues 48–92 (EPTS…TYLP) and 111–156 (LLHQ…QRQP). The span at 51–70 (SRGSNDNSNGPSNGSSVNSN) shows a compositional bias: low complexity. Residues 140–149 (SPTPTQPPAQ) are compositionally biased toward pro residues. Phosphoserine is present on S173. The disordered stretch occupies residues 181–222 (KSEETLNNNPPTAAKRTNTFPSIPSSTKKQKTSQEKRISSIS). The span at 185 to 204 (TLNNNPPTAAKRTNTFPSIP) shows a compositional bias: polar residues. The segment at residues 285-360 (ALLWLMKNCK…YHYCGLKLTV (76 aa)) is a DNA-binding region (RFX-type winged-helix). Over residues 377–391 (LVHNNDPISPLSSPS) the composition is skewed to low complexity. The disordered stretch occupies residues 377–461 (LVHNNDPISP…AANNPTGTLS (85 aa)). A compositionally biased stretch (polar residues) spans 409–428 (NRKSLSRTGSPVKQSSNDNP). Positions 434–445 (ESQHPNETEANK) are enriched in basic and acidic residues.

The protein belongs to the RFX family.

The sequence is that of RFX-like DNA-binding protein RFX1 (RFX1) from Saccharomyces cerevisiae (strain ATCC 204508 / S288c) (Baker's yeast).